An 84-amino-acid polypeptide reads, in one-letter code: Small ribosomal subunit protein uS17 (84 aa).

This sequence belongs to the universal ribosomal protein uS17 family. In terms of assembly, part of the 30S ribosomal subunit.

Its function is as follows. One of the primary rRNA binding proteins, it binds specifically to the 5'-end of 16S ribosomal RNA. The sequence is that of Small ribosomal subunit protein uS17 from Borreliella afzelii (strain PKo) (Borrelia afzelii).